The following is a 2947-amino-acid chain: 3'-5' exoribonuclease HELZ2 (2947 aa).

The C3H1-type 1 zinc-finger motif lies at 85–114 (PMRYQVCHYYRPGLGCRRHWNRCTFARSPE). A C2H2-type zinc finger spans residues 167–187 (CFTCCPPCLCPVDPRGHCPKH). The segment at 221–245 (YCMYVGRGVPCRHGASRCEYAHSAV) adopts a C3H1-type 2 zinc-finger fold. The C2H2-type; atypical zinc finger occupies 289 to 311 (CHACLVTCNSQEAFENHCSSLEH). The 549-residue stretch at 769–1317 (VGLIAGRRPE…ELLDESQQVT (549 aa)) folds into the UvrD-like helicase ATP-binding domain. Residue 790–797 (GPFGTGKT) coordinates ATP. Positions 809 to 1290 (QQPHTKVLIC…GGMSEEDSES (482 aa)) are interaction with THRAP3. A DEAA box motif is present at residues 913-916 (DEAA). The segment at 1260–1292 (EDTASGNSASRDAAAEVSTLEGGMSEEDSESDF) is disordered. 4 consecutive short sequence motifs (LXXLL motif) follow at residues 1306–1310 (LKELL), 1348–1352 (LWKFL), 1403–1407 (LVQIL), and 2240–2244 (LEGLP). Arg-2381 is subject to Omega-N-methylarginine. The segment at 2413-2947 (PEPCRGNWPR…RVQRKSALSS (535 aa)) is interaction with THRAP3. A UvrD-like helicase ATP-binding 2 domain is found at 2449–2726 (LNQSQDRAVR…IMLDTQYRMH (278 aa)). 2470–2477 (GPPGTGKT) is a binding site for ATP. The short motif at 2525–2529 (LGGLL) is the LXXLL motif 5 element.

Belongs to the DNA2/NAM7 helicase family. In terms of assembly, interacts with PPARA (via DNA-binding domain) and PPARG; the interaction stimulates the transcriptional activity of PPARA and PPARG. Interacts with THRAP3; the interaction is direct and HELZ2 and THRAP3 synergistically enhance the transcriptional activity of PPARG. It is probably part of the peroxisome proliferator activated receptor alpha interacting complex (PRIC).

It is found in the cytoplasm. The enzyme catalyses Exonucleolytic cleavage in the 3'- to 5'-direction to yield nucleoside 5'-phosphates.. It carries out the reaction ATP + H2O = ADP + phosphate + H(+). Functionally, can degrade highly structured RNAs through its concerted ATP-dependent RNA helicase and 3' to 5' exoribonuclease activities. Shows a strong preference for pyrimidine over purine residues for its nuclease activity. Acts as a transcriptional coactivator for a number of nuclear receptors including PPARA, PPARG, THRA, THRB and RXRA. This is 3'-5' exoribonuclease HELZ2 (Helz2) from Mus musculus (Mouse).